Reading from the N-terminus, the 302-residue chain is Glutamate/aspartate import solute-binding protein (302 aa).

Positions 1 to 22 (MQLRKPATAILALALSAGLAQA) are cleaved as a signal peptide.

This sequence belongs to the bacterial solute-binding protein 3 family. In terms of assembly, the complex is composed of two ATP-binding proteins (GltL), two transmembrane proteins (GltJ and GltK) and a solute-binding protein (GltI).

The protein resides in the periplasm. In terms of biological role, part of the ABC transporter complex GltIJKL involved in glutamate and aspartate uptake. Binds to both glutamate and aspartate. The sequence is that of Glutamate/aspartate import solute-binding protein (gltI) from Escherichia coli (strain K12).